The chain runs to 417 residues: Cobalamin binding intrinsic factor (417 aa).

Residues 1–18 (MAWLTLYLLSVLWAVAGT) form the signal peptide. 3 disulfides stabilise this stretch: Cys-26/Cys-246, Cys-103/Cys-288, and Cys-143/Cys-182. Asp-171 provides a ligand contact to cob(II)alamin. Ser-191 is modified (phosphoserine). Cob(II)alamin-binding residues include Asp-222 and Gln-270. 2 N-linked (GlcNAc...) asparagine glycosylation sites follow: Asn-311 and Asn-330. Residues 365–370 (SWGLIV) and 386–395 (WEFLSGKTPL) each bind cob(II)alamin. Asn-413 carries an N-linked (GlcNAc...) asparagine glycan.

Belongs to the eukaryotic cobalamin transport proteins family. Interacts with CUBN (via CUB domains). As to expression, gastric mucosa.

It localises to the secreted. Functionally, promotes absorption of the essential vitamin cobalamin (Cbl) in the ileum. After interaction with CUBN, the CBLIF-cobalamin complex is internalized via receptor-mediated endocytosis. In Mus musculus (Mouse), this protein is Cobalamin binding intrinsic factor (Cblif).